A 1178-amino-acid polypeptide reads, in one-letter code: Integrin alpha-2 (1178 aa).

Residues M1–A26 form the signal peptide. Over Y27–T1129 the chain is Extracellular. FG-GAP repeat units lie at residues L31 to C89 and A98 to S158. Residues C80 and C89 are joined by a disulfide bond. Residues N102 and N109 are each glycosylated (N-linked (GlcNAc...) asparagine). A VWFA domain is found at W185–E362. FG-GAP repeat units lie at residues G363–P417, A420–N472, T474–Q536, H537–T595, and I601–D661. Residues N429, N457, and N472 are each glycosylated (N-linked (GlcNAc...) asparagine). Residues R480 to D482 carry the Cell attachment site motif. D496, D498, D500, D504, D560, N562, D564, D568, D624, N626, D628, and D632 together coordinate Ca(2+). 5 cysteine pairs are disulfide-bonded: C677–C734, C786–C792, C862–C873, C1016–C1047, and C1052–C1057. N696 carries an N-linked (GlcNAc...) asparagine glycan. N1054, N1071, and N1078 each carry an N-linked (GlcNAc...) asparagine glycan. The chain crosses the membrane as a helical span at residues G1130–W1151. Residues K1152–S1178 are Cytoplasmic-facing. Positions G1154 to R1158 match the GFFKR motif motif.

The protein belongs to the integrin alpha chain family. As to quaternary structure, heterodimer of an alpha and a beta subunit. Alpha-2 associates with beta-1. Interacts with HPS5 and RAB21.

It localises to the membrane. Its function is as follows. Integrin alpha-2/beta-1 is a collagen receptor, being responsible for adhesion of platelets and other cells to collagens, modulation of collagen and collagenase gene expression, force generation and organization of newly synthesized extracellular matrix. It is also a receptor for laminins, collagen C-propeptides and E-cadherin. Mice homozygous for a null mutation in the alpha-2 die very early in embryogenesis. This is Integrin alpha-2 (Itga2) from Mus musculus (Mouse).